Consider the following 329-residue polypeptide: Cathepsin K (329 aa).

A signal peptide spans 1–15; it reads MWGLKVLLLPVMSFA. Positions 16 to 114 are cleaved as a propeptide — activation peptide; sequence LYPEEILDTH…TLYIPDWEGR (99 aa). The N-linked (GlcNAc...) asparagine glycan is linked to asparagine 103. Intrachain disulfides connect cysteine 136–cysteine 177, cysteine 170–cysteine 210, and cysteine 269–cysteine 318. Cysteine 139 is a catalytic residue. Catalysis depends on residues histidine 276 and asparagine 296.

The protein belongs to the peptidase C1 family.

The protein localises to the lysosome. Its subcellular location is the secreted. The protein resides in the apical cell membrane. The enzyme catalyses Broad proteolytic activity. With small-molecule substrates and inhibitors, the major determinant of specificity is P2, which is preferably Leu, Met &gt; Phe, and not Arg.. In terms of biological role, thiol protease involved in osteoclastic bone resorption and may participate partially in the disorder of bone remodeling. Displays potent endoprotease activity against fibrinogen at acid pH. May play an important role in extracellular matrix degradation. Involved in the release of thyroid hormone thyroxine (T4) by limited proteolysis of TG/thyroglobulin in the thyroid follicle lumen. The sequence is that of Cathepsin K (CTSK) from Macaca fascicularis (Crab-eating macaque).